The primary structure comprises 636 residues: Chitin synthase VI (636 aa).

Transmembrane regions (helical) follow at residues 23 to 43 (LQWF…LFCI), 374 to 394 (TIRT…TTTA), 399 to 419 (LPVG…LYFG), and 427 to 447 (IWFY…YMVY). Positions 595–636 (QRLRLEQRPRTGPSLNARWQNGPQASETSQGRSQVDDVGIAF) are disordered. Polar residues predominate over residues 607-627 (PSLNARWQNGPQASETSQGRS).

The protein belongs to the chitin synthase family. Class VI subfamily. As to expression, moderately expressed during appressorium formation.

The protein localises to the cell membrane. The catalysed reaction is [(1-&gt;4)-N-acetyl-beta-D-glucosaminyl](n) + UDP-N-acetyl-alpha-D-glucosamine = [(1-&gt;4)-N-acetyl-beta-D-glucosaminyl](n+1) + UDP + H(+). Its function is as follows. Polymerizes chitin, a structural polymer of the cell wall and septum, by transferring the sugar moiety of UDP-GlcNAc to the non-reducing end of the growing chitin polymer. Contributes to the production of conidia but is the only chitine synthase that does not contribute to the ability of fungal conidia to germinate. Involved in fungal stress tolerances. In Metarhizium acridum (strain CQMa 102), this protein is Chitin synthase VI.